Reading from the N-terminus, the 233-residue chain is NAD(P)H-hydrate epimerase (233 aa).

One can recognise a YjeF N-terminal domain in the interval 10–217; it reads AINVDLELFN…ALQRKYELNL (208 aa). 60 to 64 contacts (6S)-NADPHX; it reads NNGGD. K(+)-binding residues include Asn61 and Asp125. (6S)-NADPHX contacts are provided by residues 129–135 and Asp158; that span reads GFSFKPP. Ser161 is a binding site for K(+).

The protein belongs to the NnrE/AIBP family. K(+) serves as cofactor.

It carries out the reaction (6R)-NADHX = (6S)-NADHX. It catalyses the reaction (6R)-NADPHX = (6S)-NADPHX. Its function is as follows. Catalyzes the epimerization of the S- and R-forms of NAD(P)HX, a damaged form of NAD(P)H that is a result of enzymatic or heat-dependent hydration. This is a prerequisite for the S-specific NAD(P)H-hydrate dehydratase to allow the repair of both epimers of NAD(P)HX. This chain is NAD(P)H-hydrate epimerase, found in Drosophila grimshawi (Hawaiian fruit fly).